The sequence spans 329 residues: NADH-quinone oxidoreductase subunit H (329 aa).

Helical transmembrane passes span 9 to 29 (LIKI…ATYI), 42 to 62 (GPCY…IKLF), 75 to 95 (FIFT…MAPI), 117 to 137 (IGFL…ILAG), 154 to 174 (IQLL…LMVV), 188 to 208 (GGFL…FLIA), 238 to 258 (LKWG…SFVI), 269 to 291 (WGFI…LSMW), and 309 to 329 (WKIM…IILI).

Belongs to the complex I subunit 1 family. In terms of assembly, NDH-1 is composed of 14 different subunits. Subunits NuoA, H, J, K, L, M, N constitute the membrane sector of the complex.

The protein resides in the cell inner membrane. It catalyses the reaction a quinone + NADH + 5 H(+)(in) = a quinol + NAD(+) + 4 H(+)(out). NDH-1 shuttles electrons from NADH, via FMN and iron-sulfur (Fe-S) centers, to quinones in the respiratory chain. The immediate electron acceptor for the enzyme in this species is believed to be ubiquinone. Couples the redox reaction to proton translocation (for every two electrons transferred, four hydrogen ions are translocated across the cytoplasmic membrane), and thus conserves the redox energy in a proton gradient. This subunit may bind ubiquinone. The polypeptide is NADH-quinone oxidoreductase subunit H (Helicobacter pylori (strain Shi470)).